The chain runs to 126 residues: Small ribosomal subunit protein uS13 (126 aa).

The segment at 91–126 (RHRRGLPVRGQRTSTNARTRKGPRRAIAGKKKPGKK) is disordered. Over residues 108–126 (RTRKGPRRAIAGKKKPGKK) the composition is skewed to basic residues.

It belongs to the universal ribosomal protein uS13 family. In terms of assembly, part of the 30S ribosomal subunit. Forms a loose heterodimer with protein S19. Forms two bridges to the 50S subunit in the 70S ribosome.

In terms of biological role, located at the top of the head of the 30S subunit, it contacts several helices of the 16S rRNA. In the 70S ribosome it contacts the 23S rRNA (bridge B1a) and protein L5 of the 50S subunit (bridge B1b), connecting the 2 subunits; these bridges are implicated in subunit movement. Contacts the tRNAs in the A and P-sites. This Streptomyces coelicolor (strain ATCC BAA-471 / A3(2) / M145) protein is Small ribosomal subunit protein uS13.